Here is a 244-residue protein sequence, read N- to C-terminus: Ribonuclease HII (244 aa).

The region spanning 31–222 (RLIAGVDEAG…VRLALQGREG (192 aa)) is the RNase H type-2 domain. A divalent metal cation contacts are provided by Asp-37, Glu-38, and Asp-130.

This sequence belongs to the RNase HII family. Mn(2+) is required as a cofactor. Requires Mg(2+) as cofactor.

It localises to the cytoplasm. The enzyme catalyses Endonucleolytic cleavage to 5'-phosphomonoester.. Its function is as follows. Endonuclease that specifically degrades the RNA of RNA-DNA hybrids. The sequence is that of Ribonuclease HII from Xanthomonas axonopodis pv. citri (strain 306).